We begin with the raw amino-acid sequence, 439 residues long: Xaa-Pro dipeptidase (439 aa).

Residues Asp-244, Asp-255, His-335, Glu-380, and Glu-419 each coordinate Mn(2+).

This sequence belongs to the peptidase M24B family. Bacterial-type prolidase subfamily. It depends on Mn(2+) as a cofactor.

The enzyme catalyses Xaa-L-Pro dipeptide + H2O = an L-alpha-amino acid + L-proline. Functionally, splits dipeptides with a prolyl residue in the C-terminal position. In Shewanella woodyi (strain ATCC 51908 / MS32), this protein is Xaa-Pro dipeptidase.